Consider the following 362-residue polypeptide: 3-ketodihydrosphingosine reductase gsl-3 (362 aa).

NADP(+) is bound at residue Leu-55. Residues Gly-58, Ser-60, Gly-62, and Arg-83 each coordinate NADPH. Positions 58–62 match the GXSXG motif; that stretch reads GASEG. Asn-84 lines the NADP(+) pocket. NADPH is bound by residues Arg-87 and Asp-113. The NADP(+) site is built by Asp-113, Arg-176, Tyr-216, Lys-220, Ile-252, and Ser-254. The active-site Proton acceptor is Tyr-216. Lys-220 serves as the catalytic Lowers pKa of active site Tyr. The helical transmembrane segment at 318–338 threads the bilayer; that stretch reads NNWVLDTLMGWLIPIIYFFVL.

It belongs to the short-chain dehydrogenases/reductases (SDR) family.

The protein localises to the endoplasmic reticulum membrane. It catalyses the reaction sphinganine + NADP(+) = 3-oxosphinganine + NADPH + H(+). It participates in lipid metabolism; sphingolipid metabolism. In terms of biological role, catalyzes the reduction of 3'-oxosphinganine (3-ketodihydrosphingosine/KDS) to sphinganine (dihydrosphingosine/DHS), the second step of de novo sphingolipid biosynthesis. This is 3-ketodihydrosphingosine reductase gsl-3 (gsl-3) from Neurospora crassa (strain ATCC 24698 / 74-OR23-1A / CBS 708.71 / DSM 1257 / FGSC 987).